The following is a 389-amino-acid chain: Probable protein phosphatase 2C 12 (389 aa).

The PPM-type phosphatase domain occupies 42–356 (VASLFSQRGK…DDCSAVCLFL (315 aa)). 2 residues coordinate Mn(2+): aspartate 77 and glycine 78. Residues 119-145 (AFSDDAAASSSADSSGNSSPQPSASAS) form a disordered region. A compositionally biased stretch (low complexity) spans 121–145 (SDDAAASSSADSSGNSSPQPSASAS). Mn(2+) is bound by residues aspartate 301 and aspartate 347.

This sequence belongs to the PP2C family. Requires Mg(2+) as cofactor. The cofactor is Mn(2+).

It carries out the reaction O-phospho-L-seryl-[protein] + H2O = L-seryl-[protein] + phosphate. The catalysed reaction is O-phospho-L-threonyl-[protein] + H2O = L-threonyl-[protein] + phosphate. The sequence is that of Probable protein phosphatase 2C 12 from Oryza sativa subsp. japonica (Rice).